The sequence spans 360 residues: Probable L-asparaginase 1 (360 aa).

A signal peptide spans 1-16; that stretch reads MWRSIISFLFFSVALC. Residues asparagine 27, asparagine 35, and asparagine 40 are each glycosylated (N-linked (GlcNAc...) asparagine). Residues 39 to 359 form the Asparaginase/glutaminase domain; the sequence is PNVTIFAMGG…QNITDIFSLE (321 aa). Threonine 49 functions as the O-isoaspartyl threonine intermediate in the catalytic mechanism. An N-linked (GlcNAc...) asparagine glycan is attached at asparagine 82. Serine 96 is a binding site for substrate. Residue asparagine 106 is glycosylated (N-linked (GlcNAc...) asparagine). Residue 129-130 participates in substrate binding; that stretch reads TD. 5 N-linked (GlcNAc...) asparagine glycosylation sites follow: asparagine 144, asparagine 179, asparagine 246, asparagine 302, and asparagine 351.

It belongs to the asparaginase 1 family.

The protein localises to the secreted. It localises to the cell wall. The enzyme catalyses L-asparagine + H2O = L-aspartate + NH4(+). In Schizosaccharomyces pombe (strain 972 / ATCC 24843) (Fission yeast), this protein is Probable L-asparaginase 1.